A 270-amino-acid chain; its full sequence is NADPH-dependent 7-cyano-7-deazaguanine reductase (270 aa).

79 to 81 is a binding site for substrate; sequence IES. 81–82 lines the NADPH pocket; sequence SK. Residue Cys-177 is the Thioimide intermediate of the active site. Asp-184 (proton donor) is an active-site residue. 216-217 lines the substrate pocket; sequence HE. 245–246 contributes to the NADPH binding site; it reads RG.

This sequence belongs to the GTP cyclohydrolase I family. QueF type 2 subfamily. As to quaternary structure, homodimer.

It localises to the cytoplasm. The enzyme catalyses 7-aminomethyl-7-carbaguanine + 2 NADP(+) = 7-cyano-7-deazaguanine + 2 NADPH + 3 H(+). The protein operates within tRNA modification; tRNA-queuosine biosynthesis. Its function is as follows. Catalyzes the NADPH-dependent reduction of 7-cyano-7-deazaguanine (preQ0) to 7-aminomethyl-7-deazaguanine (preQ1). This is NADPH-dependent 7-cyano-7-deazaguanine reductase from Acinetobacter baumannii (strain AB307-0294).